The sequence spans 98 residues: La1-like protein 13 (98 aa).

Residues 1–24 (MERILKPVFLAILIVLSFSSQCMG) form the signal peptide. At lysine 97 the chain carries Lysine amide.

Belongs to the scorpion La1-like peptide family. Post-translationally, contains 4 disulfide bonds. Expressed by the venom gland.

Its subcellular location is the secreted. The protein is La1-like protein 13 of Urodacus yaschenkoi (Inland robust scorpion).